Consider the following 331-residue polypeptide: Biotin synthase (331 aa).

In terms of domain architecture, Radical SAM core spans 40-269 (YRVQLASLLS…HARVRLSAGR (230 aa)). [4Fe-4S] cluster-binding residues include Cys-55, Cys-59, and Cys-62. Cys-100, Cys-132, Cys-192, and Arg-264 together coordinate [2Fe-2S] cluster.

The protein belongs to the radical SAM superfamily. Biotin synthase family. As to quaternary structure, homodimer. [4Fe-4S] cluster is required as a cofactor. The cofactor is [2Fe-2S] cluster.

The enzyme catalyses (4R,5S)-dethiobiotin + (sulfur carrier)-SH + 2 reduced [2Fe-2S]-[ferredoxin] + 2 S-adenosyl-L-methionine = (sulfur carrier)-H + biotin + 2 5'-deoxyadenosine + 2 L-methionine + 2 oxidized [2Fe-2S]-[ferredoxin]. The protein operates within cofactor biosynthesis; biotin biosynthesis; biotin from 7,8-diaminononanoate: step 2/2. Its function is as follows. Catalyzes the conversion of dethiobiotin (DTB) to biotin by the insertion of a sulfur atom into dethiobiotin via a radical-based mechanism. This chain is Biotin synthase, found in Synechococcus sp. (strain CC9605).